Consider the following 263-residue polypeptide: Phosphoinositide-3-kinase-interacting protein 1 (263 aa).

The signal sequence occupies residues M1–G21. Residues S22–T168 lie on the Extracellular side of the membrane. The 78-residue stretch at G24–C101 folds into the Kringle domain. Cystine bridges form between C25-C101, C46-C82, and C70-C96. The N-linked (GlcNAc...) asparagine glycan is linked to N98. A helical membrane pass occupies residues L169–I189. Over L190–A263 the chain is Cytoplasmic. Positions Q242–S251 are enriched in polar residues. Residues Q242 to A263 are disordered.

It is found in the cell membrane. Its function is as follows. Negative regulator of hepatic phosphatidylinositol 3-kinase (PI3K) activity. In Pongo abelii (Sumatran orangutan), this protein is Phosphoinositide-3-kinase-interacting protein 1 (PIK3IP1).